The chain runs to 361 residues: Peptide chain release factor 1 (361 aa).

Residue Q235 is modified to N5-methylglutamine.

The protein belongs to the prokaryotic/mitochondrial release factor family. Post-translationally, methylated by PrmC. Methylation increases the termination efficiency of RF1.

The protein resides in the cytoplasm. Functionally, peptide chain release factor 1 directs the termination of translation in response to the peptide chain termination codons UAG and UAA. The protein is Peptide chain release factor 1 of Rhodopseudomonas palustris (strain ATCC BAA-98 / CGA009).